Consider the following 147-residue polypeptide: MVMGLGVLLLVFVLGLGLTPPTLAQDNSRYTHFLTQHYDAKPQGRDDRYCESIMRRRGLTSPCKDINTFIHGNKRSIKAICENKNGNPHRENLRISKSSFQVTTCKLHGGSPWPPCQYRATAGFRNVVVACENGLPVHLDQSIFRRP.

The N-terminal stretch at methionine 1–alanine 24 is a signal peptide. Glutamine 25 carries the pyrrolidone carboxylic acid modification. The active-site Proton acceptor is the histidine 37. TRNA-binding residues include arginine 45 and aspartate 46. Intrachain disulfides connect cysteine 50/cysteine 105, cysteine 63/cysteine 116, and cysteine 81/cysteine 131. A Nucleolar localization signal motif is present at residues arginine 55–leucine 59. The tRNA site is built by cysteine 105 and valine 127. The Proton donor role is filled by histidine 138.

This sequence belongs to the pancreatic ribonuclease family. As to quaternary structure, homodimer. Interacts with RNH1; inhibiting ANG ribonuclease activity. Interacts with PCNA.

The protein resides in the secreted. It localises to the nucleus. Its subcellular location is the nucleolus. It is found in the cytoplasm. The protein localises to the stress granule. Its activity is regulated as follows. Has weak tRNA ribonuclease activity by itself due to partial autoinhibition by its C-terminus, which folds into a short alpha-helix that partially occludes the substrate-binding site. In absence of stress, the ribonuclease activity is inhibited by RNH1 in the cytoplasm. In response to stress, dissociates from RNH1 in the cytoplasm and associates with cytoplasmic ribosomes with vacant A-sites: ribosomes directly activate the tRNA ribonuclease activity of ANG by refolding the C-terminal alpha-helix. In response to stress, the angiogenic activity of ANG is inhibited by RNH1 in the nucleus. Its function is as follows. Secreted ribonuclease that can either promote or restrict cell proliferation of target cells, depending on the context. Endocytosed in target cells via its receptor PLXNB2 and translocates to the cytoplasm or nucleus. Under stress conditions, localizes to the cytoplasm and promotes the assembly of stress granules (SGs): specifically cleaves a subset of tRNAs within anticodon loops to produce tRNA-derived stress-induced fragments (tiRNAs), resulting in translation repression and inhibition of cell proliferation. tiRNas also prevent formation of apoptosome, thereby promoting cell survival. Preferentially cleaves RNAs between a pyrimidine and an adenosine residue, suggesting that it cleaves the anticodon loop of tRNA(Ala) (32-UUAGCAU-38) after positions 33 and 36. Cleaves a subset of tRNAs, including tRNA(Ala), tRNA(Glu), tRNA(Gly), tRNA(Lys), tRNA(Val), tRNA(His), tRNA(Asp) and tRNA(Sec). Under growth conditions and in differentiated cells, translocates to the nucleus and stimulates ribosomal RNA (rRNA) transcription, including that containing the initiation site sequences of 45S rRNA, thereby promoting cell growth and proliferation. Angiogenin induces vascularization of normal and malignant tissues via its ability to promote rRNA transcription. Involved in hematopoietic stem and progenitor cell (HSPC) growth and survival by promoting rRNA transcription in growth conditions and inhibiting translation in response to stress, respectively. Mediates the crosstalk between myeloid and intestinal epithelial cells to protect the intestinal epithelial barrier integrity: secreted by myeloid cells and promotes intestinal epithelial cells proliferation and survival. Also mediates osteoclast-endothelial cell crosstalk in growing bone: produced by osteoclasts and protects the neighboring vascular cells against senescence by promoting rRNA transcription. The sequence is that of Angiogenin (ANG) from Gorilla gorilla gorilla (Western lowland gorilla).